A 356-amino-acid polypeptide reads, in one-letter code: Nitric oxide synthase oxygenase (356 aa).

C63 contacts heme.

Belongs to the NOS family. Bacterial NOS oxygenase subfamily. Homodimer. Forms a complex with trpS2; one homodimer of trpS2 binds one homodimer of nos. It depends on heme as a cofactor. The cofactor is (6S)-5,6,7,8-tetrahydrofolate.

It catalyses the reaction 3 reduced [flavodoxin] + 2 L-arginine + 4 O2 = 3 oxidized [flavodoxin] + 2 L-citrulline + 2 nitric oxide + 4 H2O + 5 H(+). Its activity is regulated as follows. Nitric oxide synthase activity is increased by trpS2. Its function is as follows. Catalyzes the production of nitric oxide. The complex between TrpRS II and nitric oxide synthase oxygenase catalyzes the regioselective nitration of tryptophan at the 4-position. The polypeptide is Nitric oxide synthase oxygenase (nos) (Deinococcus radiodurans (strain ATCC 13939 / DSM 20539 / JCM 16871 / CCUG 27074 / LMG 4051 / NBRC 15346 / NCIMB 9279 / VKM B-1422 / R1)).